The following is a 290-amino-acid chain: Oxaloacetate decarboxylase 2 (290 aa).

Ser-50 serves as a coordination point for substrate. Asp-88 is a binding site for Mg(2+). Substrate-binding residues include Arg-159 and His-235.

It belongs to the isocitrate lyase/PEP mutase superfamily. Oxaloacetate decarboxylase family. As to quaternary structure, homotetramer; dimer of dimers. The cofactor is Mg(2+).

It catalyses the reaction oxaloacetate + H(+) = pyruvate + CO2. In terms of biological role, catalyzes the decarboxylation of oxaloacetate into pyruvate. Seems to play a role in maintaining cellular concentrations of bicarbonate and pyruvate. In Pseudomonas fluorescens (strain Pf0-1), this protein is Oxaloacetate decarboxylase 2.